Consider the following 579-residue polypeptide: MRRPPGNGEAASEGPGGWGLWGVQESRRLCCAGHDRCKQALLQIGINMMALPGGRHLDSVTLPGQRLHLMQVDSVQRWMEDLKLMTECECMCVLQAKPISLEEDAQGDLILAGGPGPGDPLQLLLKRGWVISTELRRIGQKLAQDRWARVHSMSVRLTCHARSMVSEYSAVSRNSLKEMGEIEKLLMEKCSELSAVTERCLQVENEHVLKSMKACVSETLSMLGQHFGQLLELALTREVQALVRKIDASDNIYTTESTTGNLFSLTQEGAPLCRIIAKEGGVVALFKVCRQDSFRCLYPQALRTLASICCVEEGVHQLEKVDGVLCLADILTDNSHSEATRAEAAAVVAQVTSPHLPVTQHLSSFLESMEEIVTALVKLCQEASSGEVFLLASAALANITFFDTMACEMLLQLNAIRVLLEACSDKQRVDTPYTRDQIVTILANMSVLEQCASDIIQENGVQLIMGMLSEKPRSGTPAEVAACERVQQKAAVTLARLSRDPDVAREAVRLSCMSRLIELCRSPSERNSSDAVLVACLAALRRLAGVCPEGLQDSDFQQLVQPRLVDSFLLCSNMEESFV.

Residues 74–89 (SVQRWMEDLKLMTECE) are important for interaction with GPSM2. A PDZ-binding motif is present at residues 576–579 (ESFV).

As to quaternary structure, interacts with ALS2CR19/PAR3B and F2RL2/PAR3. Interacts with GPSM1/AGS3 and GPSM2/LGN (via TPR repeat region). Identified in a complex with GPSM2 and F2RL2. In terms of tissue distribution, isoform 1 is expressed in various tissues with stronger expression in liver, kidney and small intestine. Isoform 2 is abundantly expressed in small intestine and to a lower extent in lung and pancreas.

It localises to the cytoplasm. Its subcellular location is the cell cortex. In terms of biological role, may function as an adapter linking the Par3 complex to the GPSM1/GPSM2 complex. Involved in spindle orientation during mitosis. May regulate cell proliferation and differentiation in the developing nervous system. May play a role in the asymmetric division of fibroblasts and participate in the process of stratification of the squamous epithelium. This is Protein inscuteable homolog (INSC) from Homo sapiens (Human).